The sequence spans 505 residues: Maturase K (505 aa).

This sequence belongs to the intron maturase 2 family. MatK subfamily.

Its subcellular location is the plastid. The protein localises to the chloroplast. Functionally, usually encoded in the trnK tRNA gene intron. Probably assists in splicing its own and other chloroplast group II introns. The protein is Maturase K of Sciadopitys verticillata (Japanese umbrella-pine).